The sequence spans 391 residues: Elongation factor Tu 1 (391 aa).

In terms of domain architecture, tr-type G spans K10–E201. The interval G19–T26 is G1. G19–T26 lines the GTP pocket. Residue T26 coordinates Mg(2+). Residues G55–S59 form a G2 region. A G3 region spans residues D76 to G79. GTP is bound by residues D76–H80 and N131–D134. The interval N131 to D134 is G4. The segment at S169 to L171 is G5.

This sequence belongs to the TRAFAC class translation factor GTPase superfamily. Classic translation factor GTPase family. EF-Tu/EF-1A subfamily. In terms of assembly, monomer.

The protein resides in the cytoplasm. The enzyme catalyses GTP + H2O = GDP + phosphate + H(+). Its function is as follows. GTP hydrolase that promotes the GTP-dependent binding of aminoacyl-tRNA to the A-site of ribosomes during protein biosynthesis. In Bartonella bacilliformis (strain ATCC 35685 / KC583 / Herrer 020/F12,63), this protein is Elongation factor Tu 1.